The following is a 389-amino-acid chain: S-adenosylmethionine synthase 3 (389 aa).

Glu9 serves as a coordination point for Mg(2+). Residue His15 coordinates ATP. Glu43 lines the K(+) pocket. Residues Glu56 and Gln99 each contribute to the L-methionine site. ATP is bound by residues 167-169, 235-238, Asp246, 252-253, Ala269, Lys273, and Lys277; these read DGK, SGRF, and RK. Asp246 lines the L-methionine pocket. Lys277 serves as a coordination point for L-methionine.

This sequence belongs to the AdoMet synthase family. As to quaternary structure, homotetramer. It depends on Mn(2+) as a cofactor. Requires Mg(2+) as cofactor. Co(2+) serves as cofactor. The cofactor is K(+).

The protein localises to the cytoplasm. The enzyme catalyses L-methionine + ATP + H2O = S-adenosyl-L-methionine + phosphate + diphosphate. Its pathway is amino-acid biosynthesis; S-adenosyl-L-methionine biosynthesis; S-adenosyl-L-methionine from L-methionine: step 1/1. Its function is as follows. Catalyzes the formation of S-adenosylmethionine from methionine and ATP. The reaction comprises two steps that are both catalyzed by the same enzyme: formation of S-adenosylmethionine (AdoMet) and triphosphate, and subsequent hydrolysis of the triphosphate. The chain is S-adenosylmethionine synthase 3 (METK3) from Vitis vinifera (Grape).